The following is a 439-amino-acid chain: UDP-N-acetylglucosamine--peptide N-acetylglucosaminyltransferase stabilizing protein GtfB (439 aa).

This sequence belongs to the GtfB family. As to quaternary structure, interacts with glycosyltransferase GtfA (Gtf2); probably forms a heterotetramer with 2 subunits each of GtfA and GtfB. Part of the accessory SecA2/SecY2 protein translocation apparatus.

The protein localises to the cell membrane. The protein operates within protein modification; protein glycosylation. Functionally, required for the polymorphic O-glycosylation of the serine-rich repeat protein Fap1. A stabilizing protein that is part of the accessory SecA2/SecY2 system specifically required to export Fap1, a serine-rich fimbrial adhesin encoded upstream in the same operon. The GtfA-GtfB (Gtf1-Gtf2 in this bacteria) complex adds GlcNAc from UDP-GlcNAc to Fap1, attaching the first sugar residue. Cannot use not UDP-Glc as substrate. Stabilizes the glycosylation activity of GtfA, causing it to partially localize to the cellular membrane where it is more protease resistant. This is UDP-N-acetylglucosamine--peptide N-acetylglucosaminyltransferase stabilizing protein GtfB from Streptococcus parasanguinis.